Reading from the N-terminus, the 230-residue chain is Ribonuclease 1 (230 aa).

A signal peptide spans 1 to 22 (MKILLASLCLISLLVILPSVFS). Glutamine 38 serves as a coordination point for RNA. Cysteines 44 and 50 form a disulfide. Residues histidine 65, phenylalanine 115, 118 to 119 (HE), and 122 to 123 (KH) each bind RNA. Histidine 65 acts as the Proton donor in catalysis. Disulfide bonds link cysteine 80-cysteine 126, cysteine 186-cysteine 221, and cysteine 202-cysteine 213. Glutamate 119 is a catalytic residue. Histidine 123 functions as the Proton acceptor in the catalytic mechanism.

It belongs to the RNase T2 family.

The enzyme catalyses a ribonucleotidyl-ribonucleotide-RNA + H2O = a 3'-end 3'-phospho-ribonucleotide-RNA + a 5'-end dephospho-ribonucleoside-RNA + H(+). In terms of biological role, may remobilize phosphate, particularly when cells senesce or when phosphate becomes limiting. This Arabidopsis thaliana (Mouse-ear cress) protein is Ribonuclease 1 (RNS1).